We begin with the raw amino-acid sequence, 205 residues long: Protein MIS12 homolog (205 aa).

The stretch at 108–205 forms a coiled coil; that stretch reads PYSEEDFQHL…EKESKRLKIS (98 aa).

The protein belongs to the mis12 family. As to quaternary structure, component of the MIS12 complex composed of MIS12, DSN1, NSL1 and PMF1. Also interacts with KNL1, CBX3, CBX5, NDC80 and ZWINT.

The protein localises to the chromosome. Its subcellular location is the centromere. It localises to the kinetochore. Its function is as follows. Part of the MIS12 complex which is required for normal chromosome alignment and segregation and for kinetochore formation during mitosis. Essential for proper kinetochore microtubule attachments. The polypeptide is Protein MIS12 homolog (Homo sapiens (Human)).